The following is a 481-amino-acid chain: Transcription factor TGA9 (481 aa).

A disordered region spans residues 91 to 181 (QTLPTESSKS…GKQLDAKTLR (91 aa)). The span at 97–109 (SSKSGGESSDSGS) shows a compositional bias: low complexity. The segment covering 110-126 (ANFSGKAESQQPESPMS) has biased composition (polar residues). Positions 143–155 (SSSTSGLPSTSRT) are enriched in low complexity. The Nuclear localization signal signature appears at 165-172 (KRKATTSG). Positions 176–220 (DAKTLRRLAQNREAARKSRLRKKAYVQQLESSRIKLSQLEQELQR) constitute a bZIP domain. Positions 178-198 (KTLRRLAQNREAARKSRLRKK) are basic motif. The interval 204-218 (LESSRIKLSQLEQEL) is leucine-zipper. The DOG1 domain maps to 242-450 (AAIFDMEYGR…RALSSLWLSR (209 aa)).

The protein belongs to the bZIP family. As to quaternary structure, homodimer. Binds DNA as a dimer. Interacts with floral glutaredoxins GRXC7/ROXY1 and GRXC8/ROXY2 in the nucleus. Interacts with TGA1, TGA2, TGA3, TGA4, TGA5, TGA6, TGA7, TGA10 and PAN. In terms of tissue distribution, mostly expressed in stems, inflorescence apex and flowers, and, to a lower extent, in seedlings, leaves and siliques.

It is found in the nucleus. Its function is as follows. Together with TGA10, basic leucine-zipper transcription factor required for anther development, probably via the activation of SPL expression in anthers and via the regulation of genes with functions in early and middle tapetal development. Required for signaling responses to pathogen-associated molecular patterns (PAMPs) such as flg22 that involves chloroplastic reactive oxygen species (ROS) production and subsequent expression of H(2)O(2)-responsive genes. This chain is Transcription factor TGA9, found in Arabidopsis thaliana (Mouse-ear cress).